Reading from the N-terminus, the 489-residue chain is Cytochrome P450 monooxygenase AMT3 (489 aa).

A helical transmembrane segment spans residues 292–312 (LFMVAGTETTITALSGLVFLL). A heme-binding site is contributed by C436.

It belongs to the cytochrome P450 family. The cofactor is heme.

The protein resides in the membrane. It functions in the pathway mycotoxin biosynthesis. Its function is as follows. Cytochrome P450 monooxygenase; part of the gene clusters that mediate the biosynthesis of AM-toxins, host-selective toxins (HSTs) causing Alternaria blotch on apple, a worldwide distributed disease. AM-toxins are cyclic depsipeptides containing the 3 residues 2-hydroxy-isovaleric acid (2-HIV), dehydroalanine, L-alanine which are common for all 3 AM-toxins I to III. The fourth precursor is L-alpha-amino-methoxyphenyl-valeric acid (L-Amv) for AM-toxin I, L-alpha-amino-phenyl-valeric acid (L-Apv) for AM-toxin II, and L-alpha-amino-hydroxyphenyl-valeric acid (L-Ahv) for AM-toxin III. AM-toxins have two target sites for affecting susceptible apple cells; they cause invagination of the plasma membrane and electrolyte loss and chloroplast disorganization. The non-ribosomal peptide synthetase AMT1 contains 4 catalytic modules and is responsible for activation of each residue in AM-toxin. The aldo-keto reductase AMT2 catalyzes the conversion of 2-keto-isovaleric acid (2-KIV) to 2-hydroxy-isovaleric acid (2-HIV), one of the precursor residues incorporated by AMT1 during AM-toxin biosynthesis, by reduction of its ketone to an alcohol. The cytochrome P450 monooxygenase AMT3 and the thioesterase AMT4 are also important for AM-toxin production, but their exact function within the AM-toxin biosynthesis are not known yet. Up to 21 proteins (including AMT1 to AMT4) are predicted to be involved in AM-toxin biosynthesis since their expression ishighly up-regulated in AM-toxin-producing cultures. The protein is Cytochrome P450 monooxygenase AMT3 of Alternaria alternata (Alternaria rot fungus).